An 87-amino-acid chain; its full sequence is Sodium channel neurotoxin MeuNaTxalpha-5* (87 aa).

An N-terminal signal peptide occupies residues 1–19 (MNYLILISFALLVITGVES). The LCN-type CS-alpha/beta domain occupies 21–85 (RDAYIAKPHN…VPIRIPGKCH (65 aa)). 4 disulfide bridges follow: C31–C84, C35–C57, C43–C67, and C47–C69. Positions 86–87 (RR) are cleaved as a propeptide — removed by a carboxypeptidase.

It belongs to the long (4 C-C) scorpion toxin superfamily. Sodium channel inhibitor family. Alpha subfamily. Expressed by the venom gland.

Its subcellular location is the secreted. Alpha toxins bind voltage-independently at site-3 of sodium channels (Nav) and inhibit the inactivation of the activated channels, thereby blocking neuronal transmission. This toxin inhibits inactivation of Nav1.6/SCN8A (EC(50)=790 nM) and drosophila DmNav1 (EC(50)=280 nM). The toxin (1 uM) does not significantly shift the midpoint of activation at the two channels, but induces a significant depolarizing shift in the V(1/2) of inactivation of the channels. Has antimicrobial activity. This Mesobuthus eupeus (Lesser Asian scorpion) protein is Sodium channel neurotoxin MeuNaTxalpha-5*.